The chain runs to 197 residues: Endonuclease V (197 aa).

Residues D37 and E101 each contribute to the Mg(2+) site.

This sequence belongs to the endonuclease V family. It depends on Mg(2+) as a cofactor.

The protein localises to the cytoplasm. It catalyses the reaction Endonucleolytic cleavage at apurinic or apyrimidinic sites to products with a 5'-phosphate.. DNA repair enzyme involved in the repair of deaminated bases. Selectively cleaves double-stranded DNA at the second phosphodiester bond 3' to a deoxyinosine leaving behind the intact lesion on the nicked DNA. This chain is Endonuclease V, found in Thermococcus kodakarensis (strain ATCC BAA-918 / JCM 12380 / KOD1) (Pyrococcus kodakaraensis (strain KOD1)).